A 425-amino-acid polypeptide reads, in one-letter code: Serine--tRNA ligase (425 aa).

231–233 (TAE) is a binding site for L-serine. An ATP-binding site is contributed by 262 to 264 (RSE). Glu-285 lines the L-serine pocket. 349 to 352 (EISS) is an ATP binding site. Ser-385 lines the L-serine pocket.

The protein belongs to the class-II aminoacyl-tRNA synthetase family. Type-1 seryl-tRNA synthetase subfamily. Homodimer. The tRNA molecule binds across the dimer.

The protein localises to the cytoplasm. It carries out the reaction tRNA(Ser) + L-serine + ATP = L-seryl-tRNA(Ser) + AMP + diphosphate + H(+). The catalysed reaction is tRNA(Sec) + L-serine + ATP = L-seryl-tRNA(Sec) + AMP + diphosphate + H(+). Its pathway is aminoacyl-tRNA biosynthesis; selenocysteinyl-tRNA(Sec) biosynthesis; L-seryl-tRNA(Sec) from L-serine and tRNA(Sec): step 1/1. Functionally, catalyzes the attachment of serine to tRNA(Ser). Is also able to aminoacylate tRNA(Sec) with serine, to form the misacylated tRNA L-seryl-tRNA(Sec), which will be further converted into selenocysteinyl-tRNA(Sec). This is Serine--tRNA ligase from Desulfosudis oleivorans (strain DSM 6200 / JCM 39069 / Hxd3) (Desulfococcus oleovorans).